A 463-amino-acid polypeptide reads, in one-letter code: Fumarate hydratase class II (463 aa).

Substrate is bound by residues 97–99 (SGT), 128–131 (HPND), 138–140 (SSN), and T186. The Proton donor/acceptor role is filled by H187. The active site involves S317. Substrate is bound by residues S318 and 323-325 (KVN).

It belongs to the class-II fumarase/aspartase family. Fumarase subfamily. As to quaternary structure, homotetramer.

Its subcellular location is the cytoplasm. It catalyses the reaction (S)-malate = fumarate + H2O. The protein operates within carbohydrate metabolism; tricarboxylic acid cycle; (S)-malate from fumarate: step 1/1. In terms of biological role, involved in the TCA cycle. Catalyzes the stereospecific interconversion of fumarate to L-malate. The sequence is that of Fumarate hydratase class II from Helicobacter pylori (strain ATCC 700392 / 26695) (Campylobacter pylori).